The chain runs to 379 residues: Actin, cytoplasmic (379 aa).

This sequence belongs to the actin family.

The protein localises to the cytoplasm. The protein resides in the cytoskeleton. The enzyme catalyses ATP + H2O = ADP + phosphate + H(+). Functionally, actins are highly conserved proteins that are involved in various types of cell motility and are ubiquitously expressed in all eukaryotic cells. The protein is Actin, cytoplasmic of Euplotes crassus.